The chain runs to 529 residues: Cytochrome P450 monooxygenase patI (529 aa).

Residues 1–8 are Cytoplasmic-facing; that stretch reads MDFTQVPP. A helical transmembrane segment spans residues 9-25; that stretch reads SYILGVLLSSTSILFCL. Residues 26 to 529 lie on the Lumenal side of the membrane; it reads KYLLRSGYRP…EAQGVFSRFD (504 aa). Asn-81 and Asn-383 each carry an N-linked (GlcNAc...) asparagine glycan. A heme-binding site is contributed by Cys-449.

This sequence belongs to the cytochrome P450 family. The cofactor is heme.

It is found in the endoplasmic reticulum membrane. The enzyme catalyses 3-hydroxybenzyl alcohol + reduced [NADPH--hemoprotein reductase] + O2 = gentisyl alcohol + oxidized [NADPH--hemoprotein reductase] + H2O + H(+). It participates in mycotoxin biosynthesis; patulin biosynthesis. In terms of biological role, cytochrome P450 monooxygenase; part of the gene cluster that mediates the biosynthesis of patulin, an acetate-derived tetraketide mycotoxin produced by several fungal species that shows antimicrobial properties against several bacteria. PatI catalyzes the conversion of m-hydroxybenzyl alcohol into gentisyl alcohol. The pathway begins with the synthesis of 6-methylsalicylic acid by the polyketide synthase (PKS) patK via condensation of acetate and malonate units. The 6-methylsalicylic acid decarboxylase patG then catalyzes the decarboxylation of 6-methylsalicylic acid to yield m-cresol (also known as 3-methylphenol). These first reactions occur in the cytosol. The intermediate m-cresol is then transported into the endoplasmic reticulum where the cytochrome P450 monooxygenase patH converts it to m-hydroxybenzyl alcohol, which is further converted to gentisyl alcohol by the cytochrome P450 monooxygenase patI. The oxidoreductases patJ and patO further convert gentisyl alcohol to isoepoxydon in the vacuole. PatN catalyzes then the transformation of isoepoxydon into phyllostine. The cluster protein patF is responsible for the conversion from phyllostine to neopatulin whereas the alcohol dehydrogenase patD converts neopatulin to E-ascladiol. The steps between isoepoxydon and E-ascladiol occur in the cytosol, and E-ascladiol is probably secreted to the extracellular space by one of the cluster-specific transporters patC or patM. Finally, the secreted patulin synthase patE catalyzes the conversion of E-ascladiol to patulin. The sequence is that of Cytochrome P450 monooxygenase patI from Aspergillus clavatus (strain ATCC 1007 / CBS 513.65 / DSM 816 / NCTC 3887 / NRRL 1 / QM 1276 / 107).